The chain runs to 431 residues: Dual-specificity RNA methyltransferase RlmN (431 aa).

The segment at 1–26 (MATASLDTARPERRAGSDPFIEKTPE) is disordered. Residues 9–26 (ARPERRAGSDPFIEKTPE) show a composition bias toward basic and acidic residues. Glu-138 acts as the Proton acceptor in catalysis. Residues 144 to 394 (ANDRGTLCVS…VRTPRGRDIL (251 aa)) enclose the Radical SAM core domain. Cys-151 and Cys-397 form a disulfide bridge. [4Fe-4S] cluster is bound by residues Cys-158, Cys-162, and Cys-165. Residues 223–224 (GE), Ser-255, 277–279 (SLH), and Asn-354 contribute to the S-adenosyl-L-methionine site. Cys-397 (S-methylcysteine intermediate) is an active-site residue.

The protein belongs to the radical SAM superfamily. RlmN family. [4Fe-4S] cluster is required as a cofactor.

It localises to the cytoplasm. The enzyme catalyses adenosine(2503) in 23S rRNA + 2 reduced [2Fe-2S]-[ferredoxin] + 2 S-adenosyl-L-methionine = 2-methyladenosine(2503) in 23S rRNA + 5'-deoxyadenosine + L-methionine + 2 oxidized [2Fe-2S]-[ferredoxin] + S-adenosyl-L-homocysteine. It carries out the reaction adenosine(37) in tRNA + 2 reduced [2Fe-2S]-[ferredoxin] + 2 S-adenosyl-L-methionine = 2-methyladenosine(37) in tRNA + 5'-deoxyadenosine + L-methionine + 2 oxidized [2Fe-2S]-[ferredoxin] + S-adenosyl-L-homocysteine. Specifically methylates position 2 of adenine 2503 in 23S rRNA and position 2 of adenine 37 in tRNAs. m2A2503 modification seems to play a crucial role in the proofreading step occurring at the peptidyl transferase center and thus would serve to optimize ribosomal fidelity. This chain is Dual-specificity RNA methyltransferase RlmN, found in Methylobacterium sp. (strain 4-46).